The sequence spans 256 residues: Alcohol dehydrogenase (256 aa).

An NAD(+)-binding site is contributed by 12-35 (FVAGLGGIGLDTSKELVKRDLKNL). Residue Ser140 participates in substrate binding. The active-site Proton acceptor is the Tyr153.

The protein belongs to the short-chain dehydrogenases/reductases (SDR) family. Homodimer.

The catalysed reaction is a primary alcohol + NAD(+) = an aldehyde + NADH + H(+). It catalyses the reaction a secondary alcohol + NAD(+) = a ketone + NADH + H(+). The chain is Alcohol dehydrogenase (Adh) from Drosophila yakuba (Fruit fly).